The primary structure comprises 175 residues: NADH-ubiquinone oxidoreductase chain 6 (175 aa).

6 helical membrane passes run 1 to 21 (MMYI…GFSS), 24 to 44 (SPVY…GIIM), 51 to 71 (LGLV…GYTI), 87 to 107 (VVLS…VWLF), 112 to 132 (ELVG…EGGF), and 148 to 168 (CGFW…FIAT).

The protein belongs to the complex I subunit 6 family. Core subunit of respiratory chain NADH dehydrogenase (Complex I) which is composed of 45 different subunits.

It localises to the mitochondrion inner membrane. It catalyses the reaction a ubiquinone + NADH + 5 H(+)(in) = a ubiquinol + NAD(+) + 4 H(+)(out). Core subunit of the mitochondrial membrane respiratory chain NADH dehydrogenase (Complex I) which catalyzes electron transfer from NADH through the respiratory chain, using ubiquinone as an electron acceptor. Essential for the catalytic activity and assembly of complex I. The protein is NADH-ubiquinone oxidoreductase chain 6 (MT-ND6) of Elephas maximus (Indian elephant).